Here is a 100-residue protein sequence, read N- to C-terminus: Apolipoprotein C-II (100 aa).

Residues methionine 1 to glycine 22 form the signal peptide. Residues serine 66–methionine 74 are lipid binding. The tract at residues serine 78–glutamate 100 is lipoprotein lipase cofactor.

The protein belongs to the apolipoprotein C2 family. In terms of processing, proapolipoprotein C-II is synthesized as a sialic acid containing glycoprotein which is subsequently desialylated prior to its proteolytic processing. Post-translationally, proapolipoprotein C-II, the major form found in plasma undergoes proteolytic cleavage of its N-terminal hexapeptide to generate the mature form apolipoprotein C-II, which occurs as the minor form in plasma.

It localises to the secreted. Its function is as follows. Component of chylomicrons, very low-density lipoproteins (VLDL), low-density lipoproteins (LDL), and high-density lipoproteins (HDL) in plasma. Plays an important role in lipoprotein metabolism as an activator of lipoprotein lipase. The chain is Apolipoprotein C-II (Apoc2) from Neotoma lepida (Desert woodrat).